Reading from the N-terminus, the 215-residue chain is MOB kinase activator-like 1B (215 aa).

The interval 1–29 (MSLFGLGSRNQKTFRPKKSAPTGSKGAQL) is disordered. Zn(2+) is bound by residues Cys-80, Cys-85, His-162, and His-167.

It belongs to the MOB1/phocein family. In terms of tissue distribution, constitutively expressed with higher expression in roots, flowers and pods than in leaves and stems.

It localises to the cytoplasm. Its subcellular location is the cytoskeleton. The protein localises to the phragmoplast. The sequence is that of MOB kinase activator-like 1B from Medicago sativa subsp. falcata (Sickle medic).